Reading from the N-terminus, the 198-residue chain is Recombination protein RecR (198 aa).

The C4-type zinc-finger motif lies at 58 to 73; it reads CSVCGNFTDTDPCAIC. The Toprim domain occupies 81 to 175; sequence DIICVVEQPK…KVTRIAAGIP (95 aa).

This sequence belongs to the RecR family.

In terms of biological role, may play a role in DNA repair. It seems to be involved in an RecBC-independent recombinational process of DNA repair. It may act with RecF and RecO. This Clostridium perfringens (strain ATCC 13124 / DSM 756 / JCM 1290 / NCIMB 6125 / NCTC 8237 / Type A) protein is Recombination protein RecR.